Here is a 461-residue protein sequence, read N- to C-terminus: MLKIFNTLTRQKEEFKPIHAGEVGMYVCGITVYDLCHIGHGRTFVAFDVVARYLRFLGYKLKYVRNITDIDDKIIKRANENGESFVALVDRMIAEMHKDFDALNILRPDMEPRATHHIAEIIELTEQLIAKGHAYVADNGDVMFDVPTDPTYGVLSRQDLDQLQAGARVDVVDDKRNPMDFVLWKMSKEGEPSWPSPWGAGRPGWHIECSAMNCKQLGNHFDIHGGGSDLMFPHHENEIAQSTCAHDGQYVNYWMHSGMVMVDREKMSKSLGNFFTVRDVLKYYDAETVRYFLMSGHYRSQLNYSEENLKQARAALERLYTALRGTDKTVAPAGGEAFEARFIEAMNDDFNTPEAYSVLFDMAREVNRLKAEDMAAANAMASHLRKLSAVLGLLEQEPEAFLQSGAQADDSEVAEIEALIQQRLDARKAKDWAAADAARDRLNEMGIVLEDGPQGTTWRRK.

Cys28 is a Zn(2+) binding site. Positions 30–40 (ITVYDLCHIGH) match the 'HIGH' region motif. Zn(2+) is bound by residues Cys209, His234, and Glu238. Residues 266 to 270 (KMSKS) carry the 'KMSKS' region motif. Lys269 serves as a coordination point for ATP.

Belongs to the class-I aminoacyl-tRNA synthetase family. In terms of assembly, monomer. The cofactor is Zn(2+).

It is found in the cytoplasm. The enzyme catalyses tRNA(Cys) + L-cysteine + ATP = L-cysteinyl-tRNA(Cys) + AMP + diphosphate. The chain is Cysteine--tRNA ligase from Escherichia coli (strain SMS-3-5 / SECEC).